Consider the following 489-residue polypeptide: Putative ABC transporter ATP-binding protein TDE_0282 (489 aa).

ABC transporter domains lie at 2-241 and 269-487; these read ITLR…SMKL and FAVK…MQLE. ATP contacts are provided by residues 36-43 and 301-308; these read GASGCGKT and GENGAGKT.

Belongs to the ABC transporter superfamily.

The protein resides in the cell inner membrane. Functionally, probably part of an ABC transporter complex. Responsible for energy coupling to the transport system. The chain is Putative ABC transporter ATP-binding protein TDE_0282 from Treponema denticola (strain ATCC 35405 / DSM 14222 / CIP 103919 / JCM 8153 / KCTC 15104).